A 162-amino-acid polypeptide reads, in one-letter code: Podoplanin (162 aa).

The N-terminal stretch at 1–22 is a signal peptide; sequence MWKVSALLFVLGSASLWVLAEG. Residues 23–57 form a disordered region; sequence ASTGQPEDDTETTGLEGGVAMPGAEDDVVTPGTSE. At 23–131 the chain is on the extracellular side; the sequence is ASTGQPEDDT…EKDGLSTVTL (109 aa). O-linked (GalNAc...) threonine glycosylation is found at T25, T32, T34, T35, T52, T55, T65, T66, T76, and T85. A compositionally biased stretch (polar residues) spans 85–108; sequence TSESTVHAQEQSPSATASNVATSH. Residues 85–119 form a disordered region; that stretch reads TSESTVHAQEQSPSATASNVATSHSTEKVDGDTQT. O-linked (GalNAc...) serine glycans are attached at residues S86 and S88. Residue T89 is glycosylated (O-linked (GalNAc...) threonine). 2 O-linked (GalNAc...) serine glycosylation sites follow: S96 and S98. An O-linked (GalNAc...) threonine glycan is attached at T100. Residue S102 is glycosylated (O-linked (GalNAc...) serine). Residue T106 is glycosylated (O-linked (GalNAc...) threonine). O-linked (GalNAc...) serine glycosylation is found at S107 and S109. Over residues 109 to 119 the composition is skewed to basic and acidic residues; it reads STEKVDGDTQT. 4 O-linked (GalNAc...) threonine glycosylation sites follow: T110, T117, T119, and T120. The helical transmembrane segment at 132–152 threads the bilayer; it reads VGIIVGVLLAIGFIGAIIVVV. Residues 133 to 137 are requires for dimerization and lipid rafts association; the sequence is GIIVG. Residues 153–162 are Cytoplasmic-facing; it reads MRKMSGRYSP. Residues 154–155 form a requires for interaction with MSN and EZR region; it reads RK.

It belongs to the podoplanin family. In terms of assembly, homodimer. Interacts with CLEC1B; the interaction is independent of CLEC1B glycosylation and activates CLEC1B; the interaction is dependent of sialic acid on O-glycans. Interacts with CD9; this interaction is homophilic and attenuates platelet aggregation and pulmonary metastasis induced by PDPN. Interacts with LGALS8; the interaction is glycosylation-dependent; may participate in connection of the lymphatic endothelium to the surrounding extracellular matrix. Interacts with HSPA9. Interacts (via extracellular domain) with CD44; this interaction is required for PDPN-mediated directional migration and regulation of lamellipodia extension/stabilization during cell spreading and migration. Interacts (via cytoplasmic domain) with MSN and EZR; activates RHOA and promotes epithelial-mesenchymal transition. Interacts with CCL21; relocalized PDPN to the basolateral membrane. In terms of processing, extensively O-glycosylated. Contains sialic acid residues. O-glycosylation is necessary for platelet aggregation activity. Disialylated at Thr-52; sialic acid is critical for platelet-aggregating activity and for CLEC1B interaction. The N-terminus is blocked. Post-translationally, cleaved by a metalloprotease within its extracellular (EC) domain, generating a membrane-bound C-terminal fragment (PCTF33) and an extracellular fragment. The resulting membrane-bound C-terminal fragment (PCTF33) is further processed between Val-150 and Val-151 by PSEN1/gamma-secretase generating the intracellular domain of podoplanin (PICD). Highly expressed in placenta, lung, skeletal muscle and brain. Weakly expressed in brain, kidney and liver. In placenta, expressed on the apical plasma membrane of endothelium. In lung, expressed in alveolar epithelium. Up-regulated in colorectal tumors and expressed in 25% of early oral squamous cell carcinomas.

The protein localises to the membrane. Its subcellular location is the cell projection. It localises to the lamellipodium membrane. The protein resides in the filopodium membrane. It is found in the microvillus membrane. The protein localises to the ruffle membrane. Its subcellular location is the membrane raft. It localises to the apical cell membrane. The protein resides in the basolateral cell membrane. It is found in the invadopodium. The protein localises to the cytoplasm. Its subcellular location is the cytosol. Its function is as follows. Mediates effects on cell migration and adhesion through its different partners. During development plays a role in blood and lymphatic vessels separation by binding CLEC1B, triggering CLEC1B activation in platelets and leading to platelet activation and/or aggregation. Interaction with CD9, on the contrary, attenuates platelet aggregation induced by PDPN. Through MSN or EZR interaction promotes epithelial-mesenchymal transition (EMT) leading to ERZ phosphorylation and triggering RHOA activation leading to cell migration increase and invasiveness. Interaction with CD44 promotes directional cell migration in epithelial and tumor cells. In lymph nodes (LNs), controls fibroblastic reticular cells (FRCs) adhesion to the extracellular matrix (ECM) and contraction of the actomyosin by maintaining ERM proteins (EZR; MSN and RDX) and MYL9 activation through association with unknown transmembrane proteins. Engagement of CLEC1B by PDPN promotes FRCs relaxation by blocking lateral membrane interactions leading to reduction of ERM proteins (EZR; MSN and RDX) and MYL9 activation. Through binding with LGALS8 may participate in connection of the lymphatic endothelium to the surrounding extracellular matrix. In keratinocytes, induces changes in cell morphology showing an elongated shape, numerous membrane protrusions, major reorganization of the actin cytoskeleton, increased motility and decreased cell adhesion. Controls invadopodia stability and maturation leading to efficient degradation of the extracellular matrix (ECM) in tumor cells through modulation of RHOC activity in order to activate ROCK1/ROCK2 and LIMK1/LIMK2 and inactivation of CFL1. Required for normal lung cell proliferation and alveolus formation at birth. Does not function as a water channel or as a regulator of aquaporin-type water channels. Does not have any effect on folic acid or amino acid transport. The chain is Podoplanin from Homo sapiens (Human).